A 269-amino-acid chain; its full sequence is Tryptophan synthase alpha chain (269 aa).

Catalysis depends on proton acceptor residues glutamate 49 and aspartate 60.

Belongs to the TrpA family. Tetramer of two alpha and two beta chains.

The enzyme catalyses (1S,2R)-1-C-(indol-3-yl)glycerol 3-phosphate + L-serine = D-glyceraldehyde 3-phosphate + L-tryptophan + H2O. It participates in amino-acid biosynthesis; L-tryptophan biosynthesis; L-tryptophan from chorismate: step 5/5. In terms of biological role, the alpha subunit is responsible for the aldol cleavage of indoleglycerol phosphate to indole and glyceraldehyde 3-phosphate. The polypeptide is Tryptophan synthase alpha chain (Proteus mirabilis (strain HI4320)).